We begin with the raw amino-acid sequence, 343 residues long: Inositol 2-dehydrogenase (343 aa).

It belongs to the Gfo/Idh/MocA family. Homotetramer.

It catalyses the reaction myo-inositol + NAD(+) = scyllo-inosose + NADH + H(+). In terms of biological role, involved in the oxidation of myo-inositol (MI) to 2-keto-myo-inositol (2KMI or 2-inosose). The chain is Inositol 2-dehydrogenase from Streptomyces avermitilis (strain ATCC 31267 / DSM 46492 / JCM 5070 / NBRC 14893 / NCIMB 12804 / NRRL 8165 / MA-4680).